The following is a 520-amino-acid chain: Apolipoprotein N-acyltransferase (520 aa).

A run of 7 helical transmembrane segments spans residues 12–32, 33–53, 58–78, 93–113, 122–142, 168–188, and 193–213; these read IFTYFIAIFSGIIGVLAFSPF, DYWGCAYLSLLGLIFVAKTAE, LWSAFLWGLAFFTFGINWVHV, VLVLVLAAYLALYPMLFAYLI, AMFPVIWTFTEFLRGWLFTGF, VTFFVMWVSAVIFNLLSVLLI, and WNVVIANLLLLTLVGGLSAYS. The CN hydrolase domain maps to 232–479; the sequence is AQGNIEQNLK…ETTLTHKVAA (248 aa). Residue E272 is the Proton acceptor of the active site. K338 is a catalytic residue. Residue C390 is the Nucleophile of the active site. The chain crosses the membrane as a helical span at residues 484 to 504; sequence TPYAVFGNTAIYGLSLLLLLM.

The protein belongs to the CN hydrolase family. Apolipoprotein N-acyltransferase subfamily.

Its subcellular location is the cell inner membrane. The enzyme catalyses N-terminal S-1,2-diacyl-sn-glyceryl-L-cysteinyl-[lipoprotein] + a glycerophospholipid = N-acyl-S-1,2-diacyl-sn-glyceryl-L-cysteinyl-[lipoprotein] + a 2-acyl-sn-glycero-3-phospholipid + H(+). It participates in protein modification; lipoprotein biosynthesis (N-acyl transfer). Its function is as follows. Catalyzes the phospholipid dependent N-acylation of the N-terminal cysteine of apolipoprotein, the last step in lipoprotein maturation. This Pasteurella multocida (strain Pm70) protein is Apolipoprotein N-acyltransferase.